A 98-amino-acid polypeptide reads, in one-letter code: HIG1 domain family member 1B (98 aa).

Residues 1–28 (MSANKGWWVPPEGEDNLSKKFLRKTRES) lie on the Cytoplasmic side of the membrane. Positions 1–94 (MSANKGWWVP…YRDYIKRVSE (94 aa)) constitute an HIG1 domain. A helical membrane pass occupies residues 29–46 (PLVPIGVAGCLVIAAYRI). The Extracellular segment spans residues 47 to 60 (YRLKARGSTKLSIH). Residues 61–83 (LIHTRVAAQACAVGAIMLGAMYT) form a helical membrane-spanning segment. Residues 84-98 (MYRDYIKRVSEDAEK) lie on the Cytoplasmic side of the membrane.

The protein localises to the membrane. This Mus musculus (Mouse) protein is HIG1 domain family member 1B (Higd1b).